The primary structure comprises 316 residues: MTQSPIFLTPVFKEKIWGGTALRDRFGYSIPSESTGECWAISAHPKGPSTVANGPYKGKTLIELWEEHREVFGGVEGDRFPLLTKLLDVKEDTSIKVHPDDYYAGENEEGELGKTECWYIIDCKENAEIIYGHTARSKTELVTMINSGDWEGLLRRIKIKPGDFYYVPSGTLHALCKGALVLETQQNSDATYRVYDYDRLDSNGSPRELHFAKAVNAATVPHVDGYIDESTESRKGITIKTFVQGEYFSVYKWDINGEAEMAQDESFLICSVIEGSGLLKYEDKTCPLKKGDHFILPAQMPDFTIKGTCTLIVSHI.

Histidine 98, glutamate 116, and histidine 173 together coordinate Zn(2+). Residue arginine 193 is part of the active site.

This sequence belongs to the mannose-6-phosphate isomerase type 1 family. Requires Zn(2+) as cofactor.

It carries out the reaction D-mannose 6-phosphate = D-fructose 6-phosphate. This Bacillus subtilis (strain 168) protein is Putative mannose-6-phosphate isomerase YvyI (yvyI).